The chain runs to 165 residues: Small histone ubiquitination factor 1 (165 aa).

Residues 1–17 (MSSRRNDYHYDGNDHQY) are compositionally biased toward basic and acidic residues. The interval 1–86 (MSSRRNDYHY…STRASFGAAS (86 aa)) is disordered. Composition is skewed to low complexity over residues 29–38 (SFYESSYRSR) and 50–60 (SSYDSPSSSTN). A compositionally biased stretch (polar residues) spans 73-86 (PSNNSTRASFGAAS).

As to quaternary structure, component of the histone H2B ubiquitin ligase complex (HULC) composed of at least brl1, brl2, rhp6 and shf1.

It is found in the nucleus. The protein resides in the cytoplasm. It localises to the cytoskeleton. Its subcellular location is the microtubule organizing center. The protein localises to the spindle pole body. Component of the histone H2B ubiquitin ligase complex (HULC) which plays a role in transcription regulation by catalyzing the monoubiquitination of histone H2B to form H2BK123ub1. H2BK123ub1 gives a specific tag for epigenetic transcriptional activation and is also a prerequisite for H3K4me and H3K79me formation. This is Small histone ubiquitination factor 1 (shf1) from Schizosaccharomyces pombe (strain 972 / ATCC 24843) (Fission yeast).